The following is a 584-amino-acid chain: Asparagine synthetase [glutamine-hydrolyzing] 1 (584 aa).

C2 functions as the For GATase activity in the catalytic mechanism. The 184-residue stretch at C2–G185 folds into the Glutamine amidotransferase type-2 domain. L-glutamine-binding positions include R50–I54, N75–E77, and D98. In terms of domain architecture, Asparagine synthetase spans P193–P516. Residues L231, V267, and S341–G342 contribute to the ATP site.

It catalyses the reaction L-aspartate + L-glutamine + ATP + H2O = L-asparagine + L-glutamate + AMP + diphosphate + H(+). The protein operates within amino-acid biosynthesis; L-asparagine biosynthesis; L-asparagine from L-aspartate (L-Gln route): step 1/1. Functionally, essential for nitrogen assimilation, distribution and remobilization within the plant via the phloem. This chain is Asparagine synthetase [glutamine-hydrolyzing] 1 (ASN1), found in Arabidopsis thaliana (Mouse-ear cress).